The sequence spans 556 residues: 2-succinyl-5-enolpyruvyl-6-hydroxy-3-cyclohexene-1-carboxylate synthase (556 aa).

The protein belongs to the TPP enzyme family. MenD subfamily. As to quaternary structure, homodimer. It depends on Mg(2+) as a cofactor. Requires Mn(2+) as cofactor. Thiamine diphosphate is required as a cofactor.

The enzyme catalyses isochorismate + 2-oxoglutarate + H(+) = 5-enolpyruvoyl-6-hydroxy-2-succinyl-cyclohex-3-ene-1-carboxylate + CO2. It functions in the pathway quinol/quinone metabolism; 1,4-dihydroxy-2-naphthoate biosynthesis; 1,4-dihydroxy-2-naphthoate from chorismate: step 2/7. The protein operates within quinol/quinone metabolism; menaquinone biosynthesis. Functionally, catalyzes the thiamine diphosphate-dependent decarboxylation of 2-oxoglutarate and the subsequent addition of the resulting succinic semialdehyde-thiamine pyrophosphate anion to isochorismate to yield 2-succinyl-5-enolpyruvyl-6-hydroxy-3-cyclohexene-1-carboxylate (SEPHCHC). This is 2-succinyl-5-enolpyruvyl-6-hydroxy-3-cyclohexene-1-carboxylate synthase from Salmonella paratyphi A (strain AKU_12601).